The following is a 59-amino-acid chain: Ferredoxin-2 (59 aa).

4Fe-4S ferredoxin-type domains follow at residues 3 to 32 (YSVI…LQNG) and 33 to 59 (KAVP…AIVE). Positions 12, 15, 18, 22, 42, 45, 48, and 52 each coordinate [4Fe-4S] cluster.

In terms of assembly, homodimer. [4Fe-4S] cluster serves as cofactor.

The protein resides in the periplasm. In terms of biological role, ferredoxins are iron-sulfur proteins that transfer electrons in a wide variety of metabolic reactions. The protein is Ferredoxin-2 of Desulfomicrobium norvegicum (strain DSM 1741 / NCIMB 8310) (Desulfovibrio baculatus (strain Norway 4)).